The chain runs to 2038 residues: Homeotic protein female sterile (2038 aa).

The Bromo 1 domain maps to Arg34–Met140. Residues Leu145–Gly284 form a disordered region. Composition is skewed to low complexity over residues Gly177 to Gln209 and Pro268 to Ala279. Residues Ala330 to Ala350 form a helical membrane-spanning segment. The interval Lys396–Ser432 is disordered. Positions Thr404–Ser421 are enriched in polar residues. Residues Val451–Ala471 form a helical membrane-spanning segment. Ser452 is subject to Phosphoserine. Residues Glu475–Ile584 enclose the Bromo 2 domain. Disordered regions lie at residues Ala590 to Ala655 and Glu677 to Gly735. Residues Ala593–Gly619 show a composition bias toward basic residues. The span at Ser636–Ser649 shows a compositional bias: acidic residues. Residues Lys681 to Ser694 are compositionally biased toward basic residues. Residues Thr711–Gly735 are compositionally biased toward gly residues. Helical transmembrane passes span Leu750–Val770, Met790–Ala810, and Ala816–Gly830. Disordered regions lie at residues Gly832–Gly858, Ala891–Glu956, Cys1016–Leu1139, Ala1217–Ala1260, Gln1384–Gln1416, Met1502–His1530, Ile1580–Ala1616, Trp1645–Ala1728, Ala1745–Ile1918, and Met1957–Asp2023. The helical transmembrane segment at Gly874–Ala894 threads the bilayer. Positions Gly910–Ala927 are enriched in gly residues. The NET domain maps to Asp942–Lys1024. The residue at position 943 (Ser943) is a Phosphoserine. Over residues Leu1017–Gly1027 the composition is skewed to basic residues. A compositionally biased stretch (basic and acidic residues) spans Lys1028–Gln1046. A compositionally biased stretch (low complexity) spans Ser1079–Ser1100. Composition is skewed to polar residues over residues Ser1121–Ile1131 and Thr1222–Asn1232. Residues Trp1645–Ser1665 are compositionally biased toward low complexity. Ser1653 bears the Phosphoserine mark. The segment covering Lys1680–Gln1708 has biased composition (basic and acidic residues). 2 stretches are compositionally biased toward low complexity: residues Ser1716–Ala1728 and Ala1745–Gly1760. The helical transmembrane segment at Ile1731–Ala1751 threads the bilayer. The segment covering Gly1776 to Ser1791 has biased composition (basic and acidic residues). The segment covering Asn1800–Pro1813 has biased composition (low complexity). 2 stretches are compositionally biased toward gly residues: residues Gly1814 to Gly1828 and Pro1835 to Pro1856. Positions Ala1857–Gly1884 are enriched in low complexity. Residues Gly1885 to Ser1915 are compositionally biased toward gly residues. Residues Val1939–Ser1959 traverse the membrane as a helical segment. Phosphoserine is present on residues Ser1980 and Ser1988. Residues Gln1986 to Arg1997 are compositionally biased toward low complexity. Basic and acidic residues predominate over residues Ala1998 to Ala2017.

The protein resides in the membrane. Functionally, required maternally for proper expression of other homeotic genes involved in pattern formation, such as Ubx. The polypeptide is Homeotic protein female sterile (fs(1)h) (Drosophila melanogaster (Fruit fly)).